A 491-amino-acid polypeptide reads, in one-letter code: 3-phosphoinositide-dependent protein kinase 1 (491 aa).

The region spanning 44 to 311 (FEFGKIYGVG…YVALKRHPFF (268 aa)) is the Protein kinase domain. Residues 54 to 56 (SYS) and K73 contribute to the ATP site. The interval 75–119 (MDKKFITKENKTAYVKLERIVLDQLEHPGIIKLYFTFQDTSSLYM) is PIF-pocket. Residues 77–112 (KKFITKENKTAYVKLERIVLDQLEHPGIIKLYFTFQ) form a PIF-binding region. Residues 122–124 (ESC) and E128 contribute to the ATP site. D167 (proton acceptor) is an active-site residue. An ATP-binding site is contributed by E171. Residue S177 is modified to Phosphoserine. ATP is bound at residue D185. The segment at 185–222 (DFGSVKPMQDSQITVLPNAASDDKACTFVGTAAYVPPE) is activation loop. T211 is subject to Phosphothreonine; by autocatalysis. Phosphoserine occurs at positions 276 and 337. The interval 321-377 (SQTPPKLAPDPASQTASPERDDTHGSPWNLTHIGDSLATQNEGHSAPPTSSESSGSI) is disordered. Residues 365–376 (SAPPTSSESSGS) show a composition bias toward low complexity. Residue S382 is modified to Phosphoserine. In terms of domain architecture, PH spans 386-491 (FDSRWQQFLE…KKAIETLQNR (106 aa)).

This sequence belongs to the protein kinase superfamily. AGC Ser/Thr protein kinase family. PDPK1 subfamily. Interacts with AGC1-5 and AGC1-7. Interacts with the C-terminal PIF domain of the protein kinases D6PK/AGC1-1, OXI1/AGC2-1 and PID. Post-translationally, phosphorylation on Thr-211 in the activation loop is required for full activity. PDK1 itself can autophosphorylate Thr-211, leading to its own activation. Ubiquitous.

Its subcellular location is the cytoplasm. The protein resides in the membrane. It carries out the reaction L-seryl-[protein] + ATP = O-phospho-L-seryl-[protein] + ADP + H(+). The enzyme catalyses L-threonyl-[protein] + ATP = O-phospho-L-threonyl-[protein] + ADP + H(+). Activated by phosphatidic acid (PA) and in response to the fungal elicitor xylanase. May couple lipid signals to the activation-loop phosphorylation of several protein kinases of the so-called AGC kinase family. Interacts via its pleckstrin homology domain with phosphatidic acid, PtdIns3P and PtdIns(3,4)P2 and to a lesser extent with PtdIns(4,5)P2 and PtdIns4P. May play a general role in signaling processes controlling the pathogen/stress response, polar auxin transport and development. Transphosphorylates the AGC protein kinases OXI1/AGC2-1, PK1/S6K1, PK19/S6K2 and PID resulting in their activation. The protein is 3-phosphoinositide-dependent protein kinase 1 (PDPK1) of Arabidopsis thaliana (Mouse-ear cress).